The sequence spans 194 residues: FMN-dependent NADH:quinone oxidoreductase 1 (194 aa).

FMN is bound by residues S9 and 85–88 (MYNF).

The protein belongs to the azoreductase type 1 family. In terms of assembly, homodimer. FMN is required as a cofactor.

The catalysed reaction is 2 a quinone + NADH + H(+) = 2 a 1,4-benzosemiquinone + NAD(+). It catalyses the reaction N,N-dimethyl-1,4-phenylenediamine + anthranilate + 2 NAD(+) = 2-(4-dimethylaminophenyl)diazenylbenzoate + 2 NADH + 2 H(+). Its function is as follows. Quinone reductase that provides resistance to thiol-specific stress caused by electrophilic quinones. Functionally, also exhibits azoreductase activity. Catalyzes the reductive cleavage of the azo bond in aromatic azo compounds to the corresponding amines. The protein is FMN-dependent NADH:quinone oxidoreductase 1 of Xanthomonas euvesicatoria pv. vesicatoria (strain 85-10) (Xanthomonas campestris pv. vesicatoria).